The chain runs to 294 residues: Cytidine deaminase (294 aa).

CMP/dCMP-type deaminase domains follow at residues 48-168 (DEDA…FGPK) and 186-294 (LTGD…VLLA). 89-91 (NME) lines the substrate pocket. Histidine 102 is a binding site for Zn(2+). The Proton donor role is filled by glutamate 104. The Zn(2+) site is built by cysteine 129 and cysteine 132.

This sequence belongs to the cytidine and deoxycytidylate deaminase family. In terms of assembly, homodimer. It depends on Zn(2+) as a cofactor.

The enzyme catalyses cytidine + H2O + H(+) = uridine + NH4(+). It carries out the reaction 2'-deoxycytidine + H2O + H(+) = 2'-deoxyuridine + NH4(+). Functionally, this enzyme scavenges exogenous and endogenous cytidine and 2'-deoxycytidine for UMP synthesis. The sequence is that of Cytidine deaminase from Escherichia coli (strain K12).